We begin with the raw amino-acid sequence, 240 residues long: Small ribosomal subunit protein uS3 (240 aa).

The KH type-2 domain maps to 39 to 109; the sequence is IRQHIDANLN…QIRINVVEVN (71 aa). Positions 216–240 are disordered; that stretch reads TSAANAAPLPRRKSRRQQFEDRSEQ.

Belongs to the universal ribosomal protein uS3 family. As to quaternary structure, part of the 30S ribosomal subunit. Forms a tight complex with proteins S10 and S14.

Functionally, binds the lower part of the 30S subunit head. Binds mRNA in the 70S ribosome, positioning it for translation. In Picosynechococcus sp. (strain ATCC 27264 / PCC 7002 / PR-6) (Agmenellum quadruplicatum), this protein is Small ribosomal subunit protein uS3.